The primary structure comprises 481 residues: Transmembrane protein 39A (481 aa).

8 helical membrane-spanning segments follow: residues leucine 74–isoleucine 94, serine 109–leucine 129, leucine 150–leucine 170, serine 182–leucine 202, glutamate 278–valine 298, leucine 313–tyrosine 333, leucine 411–leucine 431, and asparagine 437–leucine 457.

It belongs to the TMEM39 family.

It is found in the endoplasmic reticulum membrane. Its function is as follows. Regulates autophagy by controlling the spatial distribution and levels of the intracellular phosphatidylinositol 4-phosphate (PtdIns(4)P) pools. Modulates (PtdIns(4)P) levels by regulating the ER-to-Golgi trafficking of the phosphatidylinositide phosphatase SACM1L. This chain is Transmembrane protein 39A (tmem39a), found in Danio rerio (Zebrafish).